Consider the following 262-residue polypeptide: Phosphatase SCO2771 (262 aa).

Displays phosphatase activity against p-nitrophenyl phosphate (pNPP) in vitro; however, the physiological substrate is unknown. This is Phosphatase SCO2771 from Streptomyces coelicolor (strain ATCC BAA-471 / A3(2) / M145).